We begin with the raw amino-acid sequence, 145 residues long: Putative pre-16S rRNA nuclease (145 aa).

Belongs to the YqgF nuclease family.

The protein resides in the cytoplasm. Its function is as follows. Could be a nuclease involved in processing of the 5'-end of pre-16S rRNA. The protein is Putative pre-16S rRNA nuclease of Prochlorococcus marinus (strain MIT 9211).